Consider the following 502-residue polypeptide: Glycerol kinase (502 aa).

T14 provides a ligand contact to ADP. 3 residues coordinate ATP: T14, T15, and S16. Residue T14 coordinates sn-glycerol 3-phosphate. R18 provides a ligand contact to ADP. Residues R84, E85, Y136, and D246 each coordinate sn-glycerol 3-phosphate. The glycerol site is built by R84, E85, Y136, D246, and Q247. Residues T268 and G311 each coordinate ADP. ATP-binding residues include T268, G311, Q315, and G412. ADP-binding residues include G412 and N416.

Belongs to the FGGY kinase family. Homotetramer and homodimer (in equilibrium). Heterodimer with EIIA-Glc. Binds 1 zinc ion per glycerol kinase EIIA-Glc dimer. The zinc ion is important for dimerization.

It catalyses the reaction glycerol + ATP = sn-glycerol 3-phosphate + ADP + H(+). It functions in the pathway polyol metabolism; glycerol degradation via glycerol kinase pathway; sn-glycerol 3-phosphate from glycerol: step 1/1. Activity of this regulatory enzyme is affected by several metabolites. Allosterically and non-competitively inhibited by fructose 1,6-bisphosphate (FBP) and unphosphorylated phosphocarrier protein EIIA-Glc (III-Glc), an integral component of the bacterial phosphotransferase (PTS) system. Key enzyme in the regulation of glycerol uptake and metabolism. Catalyzes the phosphorylation of glycerol to yield sn-glycerol 3-phosphate. The sequence is that of Glycerol kinase from Enterobacter sp. (strain 638).